The chain runs to 129 residues: Transcriptional activator protein (129 aa).

A compositionally biased stretch (low complexity) spans 1-12; that stretch reads MRSSSPSQPPSI. Residues 1–23 form a disordered region; sequence MRSSSPSQPPSIKKAHRQAKKRA. A compositionally biased stretch (basic residues) spans 13-23; that stretch reads KKAHRQAKKRA. Residues 13–28 carry the Nuclear localization signal motif; sequence KKAHRQAKKRAIRRRR. The segment at 33–50 is a zinc-finger region; it reads CGCSIYFHIDCAGHGFTH. The interval 73-117 is disordered; it reads LFQDKPSRGHAIHQDQDIQRPNPVQPQPQESIGSPQSIPELPSLD. Residues 99–109 are compositionally biased toward polar residues; sequence QPQESIGSPQS. A transactivation region spans residues 115-129; the sequence is SLDDIDDSFWVELFS.

It belongs to the geminiviridae transcriptional activator protein family. In terms of assembly, monomer. Homodimer. Homooligomer. Self-interaction correlates with nuclear localization and efficient activation of transcription. Monomers suppress local silencing by interacting with and inactivating host adenosine kinase 2 (ADK2) in the cytoplasm. Interacts with and inhibits host SNF1 kinase. Binds to ssDNA. Post-translationally, phosphorylated.

The protein localises to the host nucleus. Its subcellular location is the host cytoplasm. Its function is as follows. Strong activator of the late viral genes promoters. Enhances the expression of the capsid protein and nuclear shuttle protein. Acts as a suppressor of RNA-mediated gene silencing, also known as post-transcriptional gene silencing (PTGS), a mechanism of plant viral defense that limits the accumulation of viral RNAs. Suppresses the host RNA silencing by inhibiting adenosine kinase 2 (ADK2), a kinase involved in a general methylation pathway. Also suppresses the host basal defense by interacting with and inhibiting SNF1 kinase, a key regulator of cell metabolism implicated in innate antiviral defense. Determines pathogenicity. The chain is Transcriptional activator protein from Solanum tuberosum (Potato).